Consider the following 955-residue polypeptide: E3 ubiquitin-protein ligase MIB2 (955 aa).

An N-acetylmethionine modification is found at methionine 1. Residues 1-80 enclose the MIB/HERC2 1 domain; that stretch reads MDPDPQAGVQ…AHDLLLYDNA (80 aa). The ZZ-type zinc-finger motif lies at 86-138; that stretch reads HPNIICDCCKKHGLRGMRWKCRVCLDYDLCTQCYMHNKHELAHAFDRYETAHS. 8 residues coordinate Zn(2+): cysteine 91, cysteine 94, cysteine 106, cysteine 109, cysteine 115, cysteine 118, histidine 124, and histidine 128. The MIB/HERC2 2 domain occupies 149 to 227; that stretch reads LPRIPLRGIF…KVDLKCVGEA (79 aa). Phosphoserine is present on serine 251. 9 ANK repeats span residues 464 to 493, 497 to 526, 530 to 559, 563 to 595, 599 to 628, 633 to 663, 667 to 696, 700 to 728, and 769 to 798; these read QGRT…GVDL, EGNT…RADA, TQST…DVNL, HSDT…DVTA, QGFT…QLVD, DGFT…DVNV, KLQS…SVNA, EGDT…DPGP, and RGRS…ERQA. 2 consecutive RING-type zinc fingers follow at residues 832 to 867 and 911 to 944; these read CLVC…IRCQ and CPIC…PICR.

In terms of assembly, interacts with actin monomer. Post-translationally, ubiquitinated. Possibly via autoubiquitination. As to expression, expressed in skeletal muscle, and to a lesser extent in heart, brain and kidney.

The protein localises to the cytoplasm. Its subcellular location is the endosome. The catalysed reaction is S-ubiquitinyl-[E2 ubiquitin-conjugating enzyme]-L-cysteine + [acceptor protein]-L-lysine = [E2 ubiquitin-conjugating enzyme]-L-cysteine + N(6)-ubiquitinyl-[acceptor protein]-L-lysine.. It participates in protein modification; protein ubiquitination. Functionally, E3 ubiquitin-protein ligase that mediates ubiquitination of Delta receptors, which act as ligands of Notch proteins. Positively regulates the Delta-mediated Notch signaling by ubiquitinating the intracellular domain of Delta, leading to endocytosis of Delta receptors. The polypeptide is E3 ubiquitin-protein ligase MIB2 (Homo sapiens (Human)).